The sequence spans 1047 residues: Isoleucine--tRNA ligase (1047 aa).

The short motif at 52-62 is the 'HIGH' region element; sequence PTANGMPGAHH. The short motif at 600-604 is the 'KMSKS' region element; the sequence is KMSKH. Lysine 603 lines the ATP pocket.

It belongs to the class-I aminoacyl-tRNA synthetase family. IleS type 2 subfamily. Monomer. Zn(2+) serves as cofactor.

It is found in the cytoplasm. The enzyme catalyses tRNA(Ile) + L-isoleucine + ATP = L-isoleucyl-tRNA(Ile) + AMP + diphosphate. In terms of biological role, catalyzes the attachment of isoleucine to tRNA(Ile). As IleRS can inadvertently accommodate and process structurally similar amino acids such as valine, to avoid such errors it has two additional distinct tRNA(Ile)-dependent editing activities. One activity is designated as 'pretransfer' editing and involves the hydrolysis of activated Val-AMP. The other activity is designated 'posttransfer' editing and involves deacylation of mischarged Val-tRNA(Ile). The protein is Isoleucine--tRNA ligase of Streptomyces avermitilis (strain ATCC 31267 / DSM 46492 / JCM 5070 / NBRC 14893 / NCIMB 12804 / NRRL 8165 / MA-4680).